The chain runs to 373 residues: Mating-type protein A-2 (373 aa).

A disordered region spans residues 1–22 (MNLLNMQPKRSEQPAMFEENRA).

It to P.anserina SMR1.

Functionally, required, together with mating-type protein A-3, for efficient ascospore formation. The sequence is that of Mating-type protein A-2 (matA-2) from Neurospora crassa (strain ATCC 24698 / 74-OR23-1A / CBS 708.71 / DSM 1257 / FGSC 987).